The following is a 676-amino-acid chain: tRNA 5-methylaminomethyl-2-thiouridine biosynthesis bifunctional protein MnmC (676 aa).

Positions 1 to 241 (MFTVTPAKIY…KRECLCGIKN (241 aa)) are tRNA (mnm(5)s(2)U34)-methyltransferase. The interval 268 to 676 (IGGGIASLFT…RKLLKGTEIK (409 aa)) is FAD-dependent cmnm(5)s(2)U34 oxidoreductase.

It in the N-terminal section; belongs to the methyltransferase superfamily. tRNA (mnm(5)s(2)U34)-methyltransferase family. In the C-terminal section; belongs to the DAO family. It depends on FAD as a cofactor.

It is found in the cytoplasm. The catalysed reaction is 5-aminomethyl-2-thiouridine(34) in tRNA + S-adenosyl-L-methionine = 5-methylaminomethyl-2-thiouridine(34) in tRNA + S-adenosyl-L-homocysteine + H(+). In terms of biological role, catalyzes the last two steps in the biosynthesis of 5-methylaminomethyl-2-thiouridine (mnm(5)s(2)U) at the wobble position (U34) in tRNA. Catalyzes the FAD-dependent demodification of cmnm(5)s(2)U34 to nm(5)s(2)U34, followed by the transfer of a methyl group from S-adenosyl-L-methionine to nm(5)s(2)U34, to form mnm(5)s(2)U34. This Histophilus somni (strain 2336) (Haemophilus somnus) protein is tRNA 5-methylaminomethyl-2-thiouridine biosynthesis bifunctional protein MnmC.